The primary structure comprises 212 residues: Ion-translocating oxidoreductase complex subunit G (212 aa).

Residues 9–29 traverse the membrane as a helical segment; sequence GLLLGLFALLCTGLVAIVNQL. T176 carries the FMN phosphoryl threonine modification.

Belongs to the RnfG family. In terms of assembly, the complex is composed of six subunits: RnfA, RnfB, RnfC, RnfD, RnfE and RnfG. FMN is required as a cofactor.

It is found in the cell inner membrane. In terms of biological role, part of a membrane-bound complex that couples electron transfer with translocation of ions across the membrane. The chain is Ion-translocating oxidoreductase complex subunit G from Shewanella piezotolerans (strain WP3 / JCM 13877).